Reading from the N-terminus, the 208-residue chain is Small ribosomal subunit protein uS2 (208 aa).

Belongs to the universal ribosomal protein uS2 family.

The sequence is that of Small ribosomal subunit protein uS2 from Cenarchaeum symbiosum (strain A).